Here is a 112-residue protein sequence, read N- to C-terminus: ATP synthase epsilon chain (112 aa).

Belongs to the ATPase epsilon chain family. As to quaternary structure, F-type ATPases have 2 components, CF(1) - the catalytic core - and CF(0) - the membrane proton channel. CF(1) has five subunits: alpha(3), beta(3), gamma(1), delta(1), epsilon(1). CF(0) has three main subunits: a, b and c.

It localises to the cell membrane. Functionally, produces ATP from ADP in the presence of a proton gradient across the membrane. The sequence is that of ATP synthase epsilon chain from Rickettsia africae (strain ESF-5).